The sequence spans 468 residues: Ubiquitin carboxyl-terminal hydrolase MINDY-1 (468 aa).

Polar residues predominate over residues 1–19 (MEQPQTENPAPSKATSAET). The segment at 1-105 (MEQPQTENPA…RPQELPQSPR (105 aa)) is disordered. Positions 22–41 (SENHEALSGPEKHPQDKDGA) are enriched in basic and acidic residues. The segment covering 43–54 (ADGAAGEQEPGD) has biased composition (low complexity). The segment covering 68–80 (CPPPEASSSPPGP) has biased composition (pro residues). Ser-103 is subject to Phosphoserine. Catalysis depends on Cys-137, which acts as the Nucleophile. Residue His-319 is the Proton acceptor of the active site. Positions 388–427 (QVDQDYLIALSLQQQQQPQGTLGLSDLELAQQLQQEEYQQ) are ubiquitin-binding domain (UBD). The segment covering 423 to 432 (EEYQQQQAVQ) has biased composition (low complexity). Positions 423–468 (EEYQQQQAVQPVRTRAPSPQGRGATSGRPAGERRQRSKTESDCVLL) are disordered. Ser-440 bears the Phosphoserine mark. A compositionally biased stretch (basic and acidic residues) spans 452 to 468 (AGERRQRSKTESDCVLL).

The protein belongs to the MINDY deubiquitinase family. FAM63 subfamily.

It carries out the reaction Thiol-dependent hydrolysis of ester, thioester, amide, peptide and isopeptide bonds formed by the C-terminal Gly of ubiquitin (a 76-residue protein attached to proteins as an intracellular targeting signal).. Hydrolase that can specifically remove 'Lys-48'-linked conjugated ubiquitin from proteins. Has exodeubiquitinase activity and has a preference for long polyubiquitin chains. May play a regulatory role at the level of protein turnover. The polypeptide is Ubiquitin carboxyl-terminal hydrolase MINDY-1 (Mindy1) (Mus musculus (Mouse)).